Reading from the N-terminus, the 469-residue chain is Probable periplasmic serine endoprotease DegP-like (469 aa).

Residues 1-25 (MKVCQKYTAVLLVWLSAVVSMRAGA) form the signal peptide. Catalysis depends on charge relay system residues H108, D138, and S211. Substrate contacts are provided by residues 209–211 (GNS) and 266–270 (LGVLI). PDZ domains lie at 255-346 (LKDT…VRRG) and 352-457 (AVEI…IRQG).

This sequence belongs to the peptidase S1C family.

It localises to the periplasm. It catalyses the reaction Acts on substrates that are at least partially unfolded. The cleavage site P1 residue is normally between a pair of hydrophobic residues, such as Val-|-Val.. Functionally, might be efficient in the degradation of transiently denatured and unfolded proteins which accumulate in the periplasm following stress conditions. The sequence is that of Probable periplasmic serine endoprotease DegP-like (mucD) from Hahella chejuensis (strain KCTC 2396).